A 307-amino-acid polypeptide reads, in one-letter code: S-methyl-5'-thioadenosine phosphorylase (307 aa).

Residues T20, 62–63 (RH), and 95–96 (SA) contribute to the phosphate site. M197 provides a ligand contact to substrate. S198 contacts phosphate. 221 to 223 (DYD) is a binding site for substrate.

Belongs to the PNP/MTAP phosphorylase family. MTAP subfamily. As to quaternary structure, homotrimer.

It localises to the cytoplasm. The protein resides in the nucleus. The enzyme catalyses S-methyl-5'-thioadenosine + phosphate = 5-(methylsulfanyl)-alpha-D-ribose 1-phosphate + adenine. The protein operates within amino-acid biosynthesis; L-methionine biosynthesis via salvage pathway; S-methyl-5-thio-alpha-D-ribose 1-phosphate from S-methyl-5'-thioadenosine (phosphorylase route): step 1/1. Catalyzes the reversible phosphorylation of S-methyl-5'-thioadenosine (MTA) to adenine and 5-methylthioribose-1-phosphate. Involved in the breakdown of MTA, a major by-product of polyamine biosynthesis. Responsible for the first step in the methionine salvage pathway after MTA has been generated from S-adenosylmethionine. Has broad substrate specificity with 6-aminopurine nucleosides as preferred substrates. In Fusarium vanettenii (strain ATCC MYA-4622 / CBS 123669 / FGSC 9596 / NRRL 45880 / 77-13-4) (Fusarium solani subsp. pisi), this protein is S-methyl-5'-thioadenosine phosphorylase.